Here is a 798-residue protein sequence, read N- to C-terminus: Peroxisome proliferator-activated receptor gamma coactivator 1-alpha (798 aa).

An N6-acetyllysine modification is found at Lys79. The interval 100–140 is disordered; it reads PVDEDGLPSFDALTDGDVTTDNEASPSSMPDGTPPPQEAEE. Residues 116–129 are compositionally biased toward polar residues; it reads DVTTDNEASPSSMP. An LXXLL motif motif is present at residues 144–148; that stretch reads LKKLL. Position 146 is an N6-acetyllysine (Lys146). Phosphothreonine; by AMPK is present on Thr178. Residue Lys184 is modified to N6-acetyllysine. The disordered stretch occupies residues 213–277; the sequence is YLTTNDDPPH…NDPKGSPFEN (65 aa). The span at 219-237 shows a compositional bias: basic and acidic residues; it reads DPPHTKPTENRNSSRDKCT. Residues Lys254, Lys271, Lys278, and Lys321 each carry the N6-acetyllysine modification. The segment at 290-351 is disordered; the sequence is GTAGLTPPTT…NNSTKKGPEQ (62 aa). The interaction with PPARG stretch occupies residues 293 to 339; sequence GLTPPTTPPHKANQDNPFRASPKLKSSCKTVVPPPSKKPRYSESSGT. A compositionally biased stretch (polar residues) spans 334-346; the sequence is SESSGTQGNNSTK. N6-acetyllysine is present on residues Lys347, Lys413, Lys442, and Lys451. The mediates interaction with RNF34 stretch occupies residues 350-798; sequence EQSELYAQLS…LKEAQRSLRR (449 aa). A Phosphoserine; by AMPK modification is found at Ser539. Disordered regions lie at residues 542 to 599, 613 to 639, and 650 to 669; these read SFNS…SSRS, HRNS…SYEE, and YRRE…ERQR. Basic residues predominate over residues 563–578; sequence QRMRSRSRSFSRHRSC. Residues 579 to 599 are compositionally biased toward low complexity; the sequence is SRSPYSRSRSRSPGSRSSSRS. Residues 622–631 are compositionally biased toward basic residues; that stretch reads SRSRSPYSRR. In terms of domain architecture, RRM spans 677-753; that stretch reads RVIYVGKIRP…TDFELYFCGR (77 aa). An N6-acetyllysine mark is found at Lys758 and Lys779.

In terms of assembly, homooligomer. Interacts with MYBBP1A; inhibits MYBBP1A transcriptional activation. Interacts with PRDM16, LPIN1 and PML. Interacts (via LXXLL motif) with RORA and RORC (via AF-2 motif); activates RORA and RORC transcriptional activation. Interacts with LRPPRC. Interacts with FOXO1. Interacts with NR5A2. Post-translationally, phosphorylation by AMPK in skeletal muscle increases activation of its own promoter. Phosphorylated by CLK2. Heavily acetylated by KAT2A/GCN5 under conditions of high nutrients, leading to inactivation of PPARGC1A. Deacetylated by SIRT1 in low nutrients/high NAD conditions, leading to its activation. In terms of processing, ubiquitinated. Ubiquitination by RNF34 induces proteasomal degradation. As to expression, heart, skeletal muscle, liver and kidney. Expressed at lower levels in brain and pancreas and at very low levels in the intestine and white adipose tissue. In skeletal muscle, levels were lower in obese than in lean subjects and fasting induced a 2-fold increase in levels in the skeletal muscle in obese subjects.

The protein resides in the nucleus. The protein localises to the PML body. It localises to the cytoplasm. In terms of biological role, transcriptional coactivator for steroid receptors and nuclear receptors. Greatly increases the transcriptional activity of PPARG and thyroid hormone receptor on the uncoupling protein promoter. Can regulate key mitochondrial genes that contribute to the program of adaptive thermogenesis. Plays an essential role in metabolic reprogramming in response to dietary availability through coordination of the expression of a wide array of genes involved in glucose and fatty acid metabolism. Acts as a key regulator of gluconeogenesis: stimulates hepatic gluconeogenesis by increasing the expression of gluconeogenic enzymes, and acting together with FOXO1 to promote the fasting gluconeogenic program. Induces the expression of PERM1 in the skeletal muscle in an ESRRA-dependent manner. Also involved in the integration of the circadian rhythms and energy metabolism. Required for oscillatory expression of clock genes, such as BMAL1 and NR1D1, through the coactivation of RORA and RORC, and metabolic genes, such as PDK4 and PEPCK. The sequence is that of Peroxisome proliferator-activated receptor gamma coactivator 1-alpha (PPARGC1A) from Homo sapiens (Human).